Consider the following 417-residue polypeptide: NADH-quinone oxidoreductase subunit D (417 aa).

This sequence belongs to the complex I 49 kDa subunit family. NDH-1 is composed of 14 different subunits. Subunits NuoB, C, D, E, F, and G constitute the peripheral sector of the complex.

The protein localises to the cell inner membrane. The catalysed reaction is a quinone + NADH + 5 H(+)(in) = a quinol + NAD(+) + 4 H(+)(out). NDH-1 shuttles electrons from NADH, via FMN and iron-sulfur (Fe-S) centers, to quinones in the respiratory chain. The immediate electron acceptor for the enzyme in this species is believed to be ubiquinone. Couples the redox reaction to proton translocation (for every two electrons transferred, four hydrogen ions are translocated across the cytoplasmic membrane), and thus conserves the redox energy in a proton gradient. This is NADH-quinone oxidoreductase subunit D from Nitrosomonas eutropha (strain DSM 101675 / C91 / Nm57).